Here is a 506-residue protein sequence, read N- to C-terminus: Galactose/methyl galactoside import ATP-binding protein MglA (506 aa).

2 ABC transporter domains span residues 14–249 and 264–506; these read LEMS…VGRS and VILE…SLHL. ATP is bound at residue 46-53; that stretch reads GENGAGKS.

The protein belongs to the ABC transporter superfamily. Galactose/methyl galactoside importer (TC 3.A.1.2.3) family. As to quaternary structure, the complex is composed of one ATP-binding protein (MglA), two transmembrane proteins (MglC) and a solute-binding protein (MglB).

The protein resides in the cell inner membrane. The catalysed reaction is D-galactose(out) + ATP + H2O = D-galactose(in) + ADP + phosphate + H(+). It carries out the reaction methyl beta-D-galactoside(out) + ATP + H2O = methyl beta-D-galactoside(in) + ADP + phosphate + H(+). In terms of biological role, part of the ABC transporter complex MglABC involved in galactose/methyl galactoside import. Responsible for energy coupling to the transport system. This chain is Galactose/methyl galactoside import ATP-binding protein MglA, found in Shigella boydii serotype 4 (strain Sb227).